The sequence spans 425 residues: MSTIIDIHAREILDSRGNPTVEVDVVLEDGTMGRAAVPSGASTGAYEAVEKRDGDKSRYMGKGVLEAVAAVNGEIADELVGFDATEQVSIDRAMIELDGTENKGRLGANAILGVSMAVAKAAADFTTQPLYRYVGGAAARILPVPMMNIINGGEHADNPIDIQEFMIMPVAAENIRDAVRMGSEVFHTLKKELSAAGLSTGIGDEGGFAPNIASSREALDFILKSIEKAGYKPGEEIYLALDCAATEYYKDGKYVLSGEGKTLTSEENAAYLAALVNDYPIISIEDGMSEDDWDGWKALTDQIGDKVQLVGDDLFVTNPVRLAEGIERGCANSMLVKVNQIGSLTETLQAVDMAHRARYTNVMSHRSGETEDATIADLAVATNCGQIKTGSLARSDRLAKYNQLIRIEETLGEIAEYAGRSILKG.

Gln-163 is a (2R)-2-phosphoglycerate binding site. Glu-205 acts as the Proton donor in catalysis. Mg(2+) contacts are provided by Asp-242, Glu-285, and Asp-312. The (2R)-2-phosphoglycerate site is built by Lys-337, Arg-366, Ser-367, and Lys-388. Lys-337 functions as the Proton acceptor in the catalytic mechanism.

It belongs to the enolase family. Mg(2+) serves as cofactor.

It localises to the cytoplasm. Its subcellular location is the secreted. It is found in the cell surface. The catalysed reaction is (2R)-2-phosphoglycerate = phosphoenolpyruvate + H2O. Its pathway is carbohydrate degradation; glycolysis; pyruvate from D-glyceraldehyde 3-phosphate: step 4/5. In terms of biological role, catalyzes the reversible conversion of 2-phosphoglycerate (2-PG) into phosphoenolpyruvate (PEP). It is essential for the degradation of carbohydrates via glycolysis. This chain is Enolase, found in Ruegeria sp. (strain TM1040) (Silicibacter sp.).